Consider the following 535-residue polypeptide: EH domain-containing protein 3 (535 aa).

N-acetylmethionine is present on M1. The region spanning 55–286 is the Dynamin-type G domain; it reads FDNKPMVLLV…DLFRDIQSLP (232 aa). Residues 65–72 form a G1 motif region; the sequence is GQYSTGKT. 65-72 provides a ligand contact to ATP; that stretch reads GQYSTGKT. Residues 91-92 form a G2 motif region; the sequence is EP. The G3 motif stretch occupies residues 153–156; the sequence is DTPG. Positions 198 to 227 form a coiled coil; sequence DEFSEVIKALKNHEDKMRVVLNKADQIETQ. The tract at residues 219–222 is G4 motif; that stretch reads NKAD. K220 contacts ATP. I243 is a region of interest (G5 motif). W258 serves as a coordination point for ATP. K315 is covalently cross-linked (Glycyl lysine isopeptide (Lys-Gly) (interchain with G-Cter in SUMO)). S349 and S456 each carry phosphoserine. The 89-residue stretch at 444 to 532 folds into the EH domain; the sequence is DKPMYDEIFY…AHLLPPSKRK (89 aa). An EF-hand domain is found at 476–511; sequence LPNSVLGKIWKLADIDKDGMLDDEEFALANHLIKVK. Ca(2+) is bound by residues D489, D491, D493, M495, and E500. K511 is covalently cross-linked (Glycyl lysine isopeptide (Lys-Gly) (interchain with G-Cter in SUMO)).

This sequence belongs to the TRAFAC class dynamin-like GTPase superfamily. Dynamin/Fzo/YdjA family. EHD subfamily. Homooligomer. Heterooligomer with EHD1. Heterooligomer with EHD2 and EHD4; ATP-binding is required for heterooligomerization. Interacts with PACSIN1. Interacts with PACSIN2. Interacts (via EH domain) with MICALL1. Interacts (via EH domain) with RAB11FIP2. Interacts with ANK2. Interacts with CACNA1GG and CACNA1H. As to expression, strong expression seen in the kidney, brain and liver. In the kidney, expressed exclusively by glomerular endothelial cells; at protein level. Expressed in skeletal muscle neuromuscular junction perisynaptic region; at protein level.

It is found in the recycling endosome membrane. The protein localises to the cell membrane. Its subcellular location is the cell projection. It localises to the cilium membrane. The protein resides in the cytoplasmic vesicle. In terms of biological role, ATP- and membrane-binding protein that controls membrane reorganization/tubulation upon ATP hydrolysis. In vitro causes tubulation of endocytic membranes. Binding to phosphatidic acid induces its membrane tubulation activity. Plays a role in endocytic transport. Involved in early endosome to recycling endosome compartment (ERC), retrograde early endosome to Golgi, and endosome to plasma membrane (rapid recycling) protein transport. Involved in the regulation of Golgi maintenance and morphology. Involved in the recycling of internalized D1 dopamine receptor. Plays a role in cardiac protein trafficking probably implicating ANK2. Involved in the ventricular membrane targeting of SLC8A1 and CACNA1C and probably the atrial membrane localization of CACNA1GG and CACNA1H implicated in the regulation of atrial myocyte excitability and cardiac conduction. In conjunction with EHD4 may be involved in endocytic trafficking of KDR/VEGFR2 implicated in control of glomerular function. Involved in the rapid recycling of integrin beta-3 implicated in cell adhesion maintenance. Involved in the unidirectional retrograde dendritic transport of endocytosed BACE1 and in efficient sorting of BACE1 to axons implicating a function in neuronal APP processing. Plays a role in the formation of the ciliary vesicle, an early step in cilium biogenesis; possibly sharing redundant functions with Ehd1. This chain is EH domain-containing protein 3, found in Mus musculus (Mouse).